A 245-amino-acid chain; its full sequence is Ribonuclease PH (245 aa).

Phosphate-binding positions include R86 and 124-126; that span reads GTR.

The protein belongs to the RNase PH family. Homohexameric ring arranged as a trimer of dimers.

It carries out the reaction tRNA(n+1) + phosphate = tRNA(n) + a ribonucleoside 5'-diphosphate. Functionally, phosphorolytic 3'-5' exoribonuclease that plays an important role in tRNA 3'-end maturation. Removes nucleotide residues following the 3'-CCA terminus of tRNAs; can also add nucleotides to the ends of RNA molecules by using nucleoside diphosphates as substrates, but this may not be physiologically important. Probably plays a role in initiation of 16S rRNA degradation (leading to ribosome degradation) during starvation. This Bacillus cereus (strain ATCC 10987 / NRS 248) protein is Ribonuclease PH.